Reading from the N-terminus, the 916-residue chain is MNYKDTLLMPKTDFPMRGGLPNKEPQIQEMWDNDEQYRKALEKNKNNPSFILHDGPPYANGNLHMGHALNKIIKDFIVRYKTMQGFYAPYVPGWDTHGLPIEQALTKKGVDRKKMSVAEFREKCKEFALKQIDIQKKDFKRLGVRGDFNNPYITLTPEYEAAQIRLFGEMADKGLIYKGKKPVYWSPSSESSLAEAEIEYHDKRSASIYVAFDVKDSKGKVDSDAQFIIWTTTPWTIPSNVAITVHPELNYGQYNVNGHKYIVAQALSEAVAEALGWDKDSIQLEKEFTGKELEFVEAQHPFLDRVSLVINGEHVTTDAGTGCVHTAPGHGEDDYIVGQKYDLPVISPLNDKGVFTEEGGPFEGMFYDKANKAVTDLLKEKDALLKLDFITHSYPHDWRTKKPVIFRATPQWFASINKVRQDILDAIEDTNFKVDWGKTRIYNMIRDRGEWVISRQRVWGVPLPVFYAENGDIIMTKETVNHVADLFEKYGSNIWFEKEAKELLPEGFSHPGSPNGEFTKETDIMDVWFDSGSSHRGVLETRPELSFPADLYFEGSDQYRGWFNSSITTAVATRGQAPYKFLLSHGFVMDGEGKKMSKSLGNVIVPDQVVKQKGADIARLWVSSTDYLSDVRISDEILKQTSDVYRKIRNTLRFMLGNINDFNPETDSIAETNLLEVDRYLLNRLREFTASTINNYENFDYLNIYQEVQNFINVELSNFYLDYGKDILYIEKKDSHKRRSMQTVLYQILIDMTKLLAPILVHTAEEVWSHTPHVKEESVHLSDMPKVVDVDEELLEKWNTFMNLRDDVNRALEQARNEKVIGKSLEAKVVIGNNETFNTAEFLQQFNDLQQLFIVSQVEVKDKVNDGVSYQYGDIHIKHAEGEKCERCWNYTEELGSVGELEHLCPRCQEVVKTLV.

Positions 57 to 67 (PYANGNLHMGH) match the 'HIGH' region motif. Glu554 provides a ligand contact to L-isoleucyl-5'-AMP. Positions 595-599 (KMSKS) match the 'KMSKS' region motif. ATP is bound at residue Lys598. Zn(2+) contacts are provided by Cys885, Cys888, Cys905, and Cys908.

The protein belongs to the class-I aminoacyl-tRNA synthetase family. IleS type 1 subfamily. Monomer. It depends on Zn(2+) as a cofactor.

The protein localises to the cytoplasm. It catalyses the reaction tRNA(Ile) + L-isoleucine + ATP = L-isoleucyl-tRNA(Ile) + AMP + diphosphate. In terms of biological role, catalyzes the attachment of isoleucine to tRNA(Ile). As IleRS can inadvertently accommodate and process structurally similar amino acids such as valine, to avoid such errors it has two additional distinct tRNA(Ile)-dependent editing activities. One activity is designated as 'pretransfer' editing and involves the hydrolysis of activated Val-AMP. The other activity is designated 'posttransfer' editing and involves deacylation of mischarged Val-tRNA(Ile). This Staphylococcus epidermidis (strain ATCC 12228 / FDA PCI 1200) protein is Isoleucine--tRNA ligase.